Consider the following 549-residue polypeptide: Urocanate hydratase (549 aa).

NAD(+) is bound by residues G46 to G47, Q124, G170 to G172, E190, R195, N236 to A237, Q257 to H261, Y267 to V268, and Y316. C404 is a catalytic residue. NAD(+) is bound at residue G486.

Belongs to the urocanase family. The cofactor is NAD(+).

Its subcellular location is the cytoplasm. It catalyses the reaction 4-imidazolone-5-propanoate = trans-urocanate + H2O. It functions in the pathway amino-acid degradation; L-histidine degradation into L-glutamate; N-formimidoyl-L-glutamate from L-histidine: step 2/3. Functionally, catalyzes the conversion of urocanate to 4-imidazolone-5-propionate. This chain is Urocanate hydratase, found in Natranaerobius thermophilus (strain ATCC BAA-1301 / DSM 18059 / JW/NM-WN-LF).